A 358-amino-acid chain; its full sequence is Alanine racemase (358 aa).

K34 acts as the Proton acceptor; specific for D-alanine in catalysis. The residue at position 34 (K34) is an N6-(pyridoxal phosphate)lysine. R130 serves as a coordination point for substrate. The Proton acceptor; specific for L-alanine role is filled by Y254. Residue M302 coordinates substrate.

Belongs to the alanine racemase family. It depends on pyridoxal 5'-phosphate as a cofactor.

The catalysed reaction is L-alanine = D-alanine. Its pathway is amino-acid biosynthesis; D-alanine biosynthesis; D-alanine from L-alanine: step 1/1. Catalyzes the interconversion of L-alanine and D-alanine. May also act on other amino acids. This is Alanine racemase (alr) from Stutzerimonas stutzeri (strain A1501) (Pseudomonas stutzeri).